The following is a 220-amino-acid chain: MHADFWQQRWRAGQIGFHQAQVNQDLQQYWPRLGLAPEARVLVPLCGKSQDMSWLIGQGCHVVGAELSETAVESYFSEHGVQPQITRQGDFSVYAAPGIEIWCGDFFALTSQDIGHCTAFYDRAALIALPADLRERYVQQLEALMPRECNGLLITLDYDQSRLEGPPFSVPPTWLQAFVSGNWNITKVGEHDALHSSPKALKAGVERLDEQVYVLARKLR.

S-adenosyl-L-methionine-binding residues include Trp10, Leu45, Glu66, and Arg123.

Belongs to the class I-like SAM-binding methyltransferase superfamily. TPMT family.

It is found in the cytoplasm. The enzyme catalyses S-adenosyl-L-methionine + a thiopurine = S-adenosyl-L-homocysteine + a thiopurine S-methylether.. The protein is Thiopurine S-methyltransferase of Pseudomonas syringae pv. tomato (strain ATCC BAA-871 / DC3000).